The primary structure comprises 860 residues: DNA mismatch repair protein MutS (860 aa).

An ATP-binding site is contributed by 620-627; that stretch reads GPNMGGKS.

This sequence belongs to the DNA mismatch repair MutS family.

Functionally, this protein is involved in the repair of mismatches in DNA. It is possible that it carries out the mismatch recognition step. This protein has a weak ATPase activity. This chain is DNA mismatch repair protein MutS, found in Dechloromonas aromatica (strain RCB).